The sequence spans 257 residues: MYSACDVVRDAMAQSHLCACPNDKLPQCKGVTKAPPECSVFHVAKLQDTKFKWKYTLDPLRAQKLDQINKDIEKDAITLRLIYGIELSPEDLEWWKMQRCLINKNTGAKGGQFANKYLERQDLELLGYSPTPLIGGDLMFTALPDKVLRTIPVAWDRFLNPAIMIFFLIILLCVILGIFYVLVRNTLRRKQKNKLHQMEIKRFIKEKEQDPYIHTSFESWPADPNKEWKDLIPVYEAQGYCMADYRKKLGMPPGPNC.

The next 2 membrane-spanning stretches (helical) occupy residues 123–143 and 163–183; these read LELL…FTAL and IMIF…YVLV.

Belongs to the asfivirus C257R family.

The protein localises to the host membrane. Its subcellular location is the virion. This chain is Transmembrane protein C257L, found in African swine fever virus (isolate Pig/Kenya/KEN-50/1950) (ASFV).